The following is a 261-amino-acid chain: 14-3-3-like protein A (261 aa).

Belongs to the 14-3-3 family.

The sequence is that of 14-3-3-like protein A from Vicia faba (Broad bean).